Consider the following 612-residue polypeptide: UvrABC system protein C (612 aa).

Residues 13-92 (AKPGVYIMHD…IKEHRPKYNT (80 aa)) form the GIY-YIG domain. In terms of domain architecture, UVR spans 204 to 239 (KKIMDRLTTQMQEASEKMEYEEAARYRDLLMSVKQV).

Belongs to the UvrC family. In terms of assembly, interacts with UvrB in an incision complex.

Its subcellular location is the cytoplasm. The UvrABC repair system catalyzes the recognition and processing of DNA lesions. UvrC both incises the 5' and 3' sides of the lesion. The N-terminal half is responsible for the 3' incision and the C-terminal half is responsible for the 5' incision. This is UvrABC system protein C from Lachnospira eligens (strain ATCC 27750 / DSM 3376 / VPI C15-48 / C15-B4) (Eubacterium eligens).